Here is a 244-residue protein sequence, read N- to C-terminus: Probable transcriptional regulatory protein DNO_1179 (244 aa).

It belongs to the TACO1 family.

The protein localises to the cytoplasm. This is Probable transcriptional regulatory protein DNO_1179 from Dichelobacter nodosus (strain VCS1703A).